Consider the following 403-residue polypeptide: MPLFKSRIKSALVHRREQGLTRQLKVLENSNGPLLTSEGSSFINFSSNDYLGLANDSELVDAWQVGLSQYGAGSAASPLVTGFSPAHRNLETQLCEWLGFERAILFNSGFSANQALLFSLLEKDDFLLQDKLNHASLMEAGMLSPATMKRFKHNDTQHLESLLSQTPQSLVVTEGVFSMDGDQAPLRQISSLTNQYDSWLAVDDAHGIGVLGDNGAGSCNAAQISPDILVVTFGKAFGLSGAAILCSSEVGDYLTQFARHHVYSTAMPPSQAVALSHACQMIQTQEWRREKLTELGALYAEQMNGVKGFIDTQTPIKPFLIGEAQAALSIAEELKRNQVWVTAIRSPTVPIGTARLRITLTANHSQEQILQLTDSLLQAIERSNDSGSKPSIESSFELKKEAQ.

Arginine 22 is a binding site for substrate. Glycine 109 to phenylalanine 110 is a pyridoxal 5'-phosphate binding site. Residue histidine 134 participates in substrate binding. Pyridoxal 5'-phosphate is bound by residues serine 178, histidine 206, and threonine 232. Residue lysine 235 is modified to N6-(pyridoxal phosphate)lysine. Residue threonine 348 participates in substrate binding. The tract at residues serine 383 to glutamine 403 is disordered. Positions aspartate 385–serine 394 are enriched in polar residues.

It belongs to the class-II pyridoxal-phosphate-dependent aminotransferase family. BioF subfamily. In terms of assembly, homodimer. Requires pyridoxal 5'-phosphate as cofactor.

The catalysed reaction is 6-carboxyhexanoyl-[ACP] + L-alanine + H(+) = (8S)-8-amino-7-oxononanoate + holo-[ACP] + CO2. The protein operates within cofactor biosynthesis; biotin biosynthesis. Its function is as follows. Catalyzes the decarboxylative condensation of pimeloyl-[acyl-carrier protein] and L-alanine to produce 8-amino-7-oxononanoate (AON), [acyl-carrier protein], and carbon dioxide. In Vibrio atlanticus (strain LGP32) (Vibrio splendidus (strain Mel32)), this protein is 8-amino-7-oxononanoate synthase.